Consider the following 338-residue polypeptide: Phenylalanine--tRNA ligase alpha subunit (338 aa).

A Mg(2+)-binding site is contributed by E253.

Belongs to the class-II aminoacyl-tRNA synthetase family. Phe-tRNA synthetase alpha subunit type 1 subfamily. Tetramer of two alpha and two beta subunits. The cofactor is Mg(2+).

The protein localises to the cytoplasm. It carries out the reaction tRNA(Phe) + L-phenylalanine + ATP = L-phenylalanyl-tRNA(Phe) + AMP + diphosphate + H(+). In Geobacter sp. (strain M21), this protein is Phenylalanine--tRNA ligase alpha subunit.